Reading from the N-terminus, the 630-residue chain is UvrABC system protein C (630 aa).

The segment at 1–96 is disordered; sequence MGAEGLQGEG…GEAHRRGGTG (96 aa). Residues 9–28 are compositionally biased toward low complexity; the sequence is EGEVPPQGAGVPGQVQVGVH. The 74-residue stretch at 52–125 folds into the GIY-YIG domain; it reads DPRGLPVEAG…IKAHRPLYNV (74 aa). The segment covering 75–91 has biased composition (basic and acidic residues); sequence RPGEKLLPRRGQGEAHR. A UVR domain is found at 234–269; it reads DGLLQELEAKMREAARRLEFERAAEIRDQMEALRAF.

It belongs to the UvrC family. Interacts with UvrB in an incision complex.

Its subcellular location is the cytoplasm. Functionally, the UvrABC repair system catalyzes the recognition and processing of DNA lesions. UvrC both incises the 5' and 3' sides of the lesion. The N-terminal half is responsible for the 3' incision and the C-terminal half is responsible for the 5' incision. This chain is UvrABC system protein C, found in Thermus thermophilus (strain ATCC BAA-163 / DSM 7039 / HB27).